Here is a 341-residue protein sequence, read N- to C-terminus: MAPTLQGQWIKVGQKGGTGPGPRSSHGIAAVGDKLYSFGGELTPNKHIDKDLYVFDFNTQTWSIAQPKGDAPTVSCLGVRMVAVGTKIYIFGGRDENRNFENFRSYDTVTSEWTFLTKLDEVGGPEARTFHSMASDENHVYVFGGVSKGGTMNTPTRFRTIEAYNIADGKWAQLPDPGDNFEKRGGAGFAVVQGKIWVVYGFATSIVPGGKDDYESNAVQFYDPASKKWTEVETTGAKPSARSVFAHAVVGKYIIIFAGEVWPDLNGHYGPGTLSNEGYALDTETLVWEKLGEEGAPAIPRGWTAYTAATVDGKNGLLMHGGKLPTNERTDDLYFYAVNSA.

The segment at 1–24 is disordered; the sequence is MAPTLQGQWIKVGQKGGTGPGPRS. Kelch repeat units lie at residues 34–82, 87–133, 139–194, and 203–249; these read KLYS…VRMV, KIYI…FHSM, HVYV…VVQG, and ATSI…AHAV. A (Z)-N-(sulfonatooxy)alkanimidothioate-binding residues include Lys-46, Arg-94, Thr-129, Phe-130, Arg-157, Gly-186, Lys-211, and Val-244. The Proton donor role is filled by Arg-94. Catalysis depends on Arg-157, which acts as the Proton donor. Positions 260, 264, and 268 each coordinate Fe(2+). Trp-303 is an a (Z)-N-(sulfonatooxy)alkanimidothioate binding site.

Homodimer. Interacts with WRKY53. Requires Fe(2+) as cofactor. As to expression, expressed in epidermal cells of all above-ground organs except the anthers, in cambial cells of leaf and stem vascular bundles, and in glucosinolates rich S-cells found in stems just below the inflorescence. Absent from roots.

The protein resides in the cytoplasm. Its subcellular location is the nucleus. The enzyme catalyses a (Z)-N-(sulfonatooxy)alkenimidothioate = an epithionitrile + sulfate. It carries out the reaction a (Z)-N-(sulfonatooxy)alkanimidothioate = a nitrile + sulfur + sulfate. It catalyses the reaction (Z)-(indol-3-yl)-N-(sulfonatooxy)methanimidothioate = (indol-3-yl)acetonitrile + sulfur + sulfate. With respect to regulation, not dependent on the presence of Fe(2+) although supplemental Fe(2+) increases nitriles formation. Specifier protein that contributes to constitutive and herbivore-induced simple nitrile formation. Converts glucosinolates both to epithionitriles and to simple nitriles in the presence of myrosinase. Promotes the formation of epithionitriles after hydrolysis of alkenylglucosinolates containing a terminal double bond. Mediates indol-3-ylacetonitrile (IACN) production from indol-3-ylmethylglucosinolate (glucobrassicin). Triggers the production of 3,4-epithiobutylnitrile from 2-propenylisothiocyanate, product of 2-propenylglucosinolate (sinigrin) catalysis by myrosinase. Seems inactive toward benzylglucosinolate (glucotropaeolin). Acts as a negative regulator of senescence. The chain is N-(sulfonatooxy)alkenimidothioic acid sulfate-lyase (epithionitrile-forming) from Arabidopsis thaliana (Mouse-ear cress).